A 222-amino-acid polypeptide reads, in one-letter code: MKTNPIKLEKKLKLKFSDQKIFIKSLTHKSFDSINNNEKIEFLGDRVLGLIIAKKLLELYPDEKEGVLDKKFASLVNKKKCLEIAKKIELEKYILVLNPKNKKIEIEDKIVADCLEALIGAIYLDKGLNFTERFILNLWSEHITASVITQIDAKTKLQEYSLKIFKVLPIYKLISNTGPRHKPLFKVAVKLKNTKFFTAEGTSKKDAEQNAASLCLQDIFKK.

An RNase III domain is found at 5–127 (PIKLEKKLKL…LIGAIYLDKG (123 aa)). Residue glutamate 41 participates in Mg(2+) binding. Aspartate 45 is an active-site residue. The Mg(2+) site is built by aspartate 113 and glutamate 116. Glutamate 116 is an active-site residue. Residues 152–221 (DAKTKLQEYS…ASLCLQDIFK (70 aa)) form the DRBM domain.

This sequence belongs to the ribonuclease III family. Homodimer. Mg(2+) is required as a cofactor.

It localises to the cytoplasm. The catalysed reaction is Endonucleolytic cleavage to 5'-phosphomonoester.. Its function is as follows. Digests double-stranded RNA. Involved in the processing of primary rRNA transcript to yield the immediate precursors to the large and small rRNAs (23S and 16S). Processes some mRNAs, and tRNAs when they are encoded in the rRNA operon. Processes pre-crRNA and tracrRNA of type II CRISPR loci if present in the organism. This chain is Ribonuclease 3, found in Pelagibacter ubique (strain HTCC1062).